Consider the following 663-residue polypeptide: Translation factor GUF1, mitochondrial (663 aa).

A mitochondrion-targeting transit peptide spans 1–44 (MRGCLQSVRWLTTALRRPAPQLSCLPFQPFASTSRLFSSCASRA). The region spanning 65–245 (ERFRNFCIVA…TIVEQIPAPV (181 aa)) is the tr-type G domain. Residues 74 to 81 (AHVDHGKS), 138 to 142 (DTPGH), and 192 to 195 (NKVD) each bind GTP.

The protein belongs to the TRAFAC class translation factor GTPase superfamily. Classic translation factor GTPase family. LepA subfamily.

The protein resides in the mitochondrion inner membrane. It catalyses the reaction GTP + H2O = GDP + phosphate + H(+). Functionally, promotes mitochondrial protein synthesis. May act as a fidelity factor of the translation reaction, by catalyzing a one-codon backward translocation of tRNAs on improperly translocated ribosomes. Binds to mitochondrial ribosomes in a GTP-dependent manner. The chain is Translation factor GUF1, mitochondrial from Coccidioides posadasii (strain C735) (Valley fever fungus).